The sequence spans 428 residues: Maltoporin (428 aa).

The first 24 residues, Met-1–Ala-24, serve as a signal peptide directing secretion.

The protein belongs to the porin LamB (TC 1.B.3) family. In terms of assembly, homotrimer formed of three 18-stranded antiparallel beta-barrels, containing three independent channels.

It is found in the cell outer membrane. It carries out the reaction beta-maltose(in) = beta-maltose(out). Functionally, involved in the transport of maltose and maltodextrins. The sequence is that of Maltoporin from Photorhabdus laumondii subsp. laumondii (strain DSM 15139 / CIP 105565 / TT01) (Photorhabdus luminescens subsp. laumondii).